Here is a 190-residue protein sequence, read N- to C-terminus: MRITIAGKIGSGKSTVSQEISKITGYSVYSSGTFFRESAKKMGMSIEDFNRYAETHPEADYATDGMQKDFMETHDNIIVEGRLAGWICKIYSISAFKVFLYATRYTRLVRFSNREGIEIDEAAKLLDEREISEKKRYLDLYGIDIDDLSIYDIVVNTEFMKPEEVAVLVLNRIDEMSRKEVYTPRILKGM.

7–15 (GKIGSGKST) provides a ligand contact to ATP.

Belongs to the cytidylate kinase family. Type 2 subfamily.

It is found in the cytoplasm. It catalyses the reaction CMP + ATP = CDP + ADP. The enzyme catalyses dCMP + ATP = dCDP + ADP. In Thermoplasma volcanium (strain ATCC 51530 / DSM 4299 / JCM 9571 / NBRC 15438 / GSS1), this protein is Cytidylate kinase.